The sequence spans 281 residues: 40S small subunit processome assembly factor 1 (281 aa).

The interval 29–141 (LGETEGETEQ…DEDEPAKNKT (113 aa)) is disordered. 2 positions are modified to phosphoserine: Ser-67 and Ser-75. An N6-acetyllysine modification is found at Lys-172. The tract at residues 221 to 254 (ETDIFKKKKKKGRGQEDRRSKKSAPSILSSGQVG) is disordered. Position 267 is a phosphoserine (Ser-267).

Part of the small subunit (SSU) processome, composed of more than 70 proteins and the RNA chaperone small nucleolar RNA (snoRNA) U3.

Its subcellular location is the chromosome. It is found in the nucleus. It localises to the nucleolus. In terms of biological role, part of the small subunit (SSU) processome, first precursor of the small eukaryotic ribosomal subunit. During the assembly of the SSU processome in the nucleolus, many ribosome biogenesis factors, an RNA chaperone and ribosomal proteins associate with the nascent pre-rRNA and work in concert to generate RNA folding, modifications, rearrangements and cleavage as well as targeted degradation of pre-ribosomal RNA by the RNA exosome. Prevents helicase DHX37 to be recruited before post-A1 state. This Mus musculus (Mouse) protein is 40S small subunit processome assembly factor 1.